Consider the following 306-residue polypeptide: Ribonuclease Z (306 aa).

Residues histidine 63, histidine 65, aspartate 67, histidine 68, histidine 141, aspartate 211, and histidine 269 each contribute to the Zn(2+) site. Aspartate 67 (proton acceptor) is an active-site residue.

It belongs to the RNase Z family. In terms of assembly, homodimer. Zn(2+) serves as cofactor.

The enzyme catalyses Endonucleolytic cleavage of RNA, removing extra 3' nucleotides from tRNA precursor, generating 3' termini of tRNAs. A 3'-hydroxy group is left at the tRNA terminus and a 5'-phosphoryl group is left at the trailer molecule.. Functionally, zinc phosphodiesterase, which displays some tRNA 3'-processing endonuclease activity. Probably involved in tRNA maturation, by removing a 3'-trailer from precursor tRNA. The chain is Ribonuclease Z from Staphylococcus aureus (strain Mu3 / ATCC 700698).